Consider the following 68-residue polypeptide: Large ribosomal subunit protein uL29 (68 aa).

The protein belongs to the universal ribosomal protein uL29 family.

This chain is Large ribosomal subunit protein uL29 (rpl29), found in Archaeoglobus fulgidus (strain ATCC 49558 / DSM 4304 / JCM 9628 / NBRC 100126 / VC-16).